The following is a 180-amino-acid chain: Bifunctional protein PyrR (180 aa).

A PRPP-binding motif is present at residues 101-113; sequence VILVDDVLYTGRT.

Belongs to the purine/pyrimidine phosphoribosyltransferase family. PyrR subfamily. Homodimer and homohexamer; in equilibrium.

It catalyses the reaction UMP + diphosphate = 5-phospho-alpha-D-ribose 1-diphosphate + uracil. Regulates transcriptional attenuation of the pyrimidine nucleotide (pyr) operon by binding in a uridine-dependent manner to specific sites on pyr mRNA. This disrupts an antiterminator hairpin in the RNA and favors formation of a downstream transcription terminator, leading to a reduced expression of downstream genes. Its function is as follows. Also displays a weak uracil phosphoribosyltransferase activity which is not physiologically significant. The protein is Bifunctional protein PyrR of Bacillus cytotoxicus (strain DSM 22905 / CIP 110041 / 391-98 / NVH 391-98).